We begin with the raw amino-acid sequence, 272 residues long: Undecaprenyl-diphosphatase (272 aa).

Helical transmembrane passes span 6-26 (SLLI…LPVS), 45-65 (AKTF…VMFW), 92-112 (THIL…HDVI), 115-135 (LFYP…LLAA), 189-209 (YAAS…ATVL), 225-245 (MFAV…KTFL), and 251-271 (ISFV…YMVF).

Belongs to the UppP family.

The protein localises to the cell inner membrane. The catalysed reaction is di-trans,octa-cis-undecaprenyl diphosphate + H2O = di-trans,octa-cis-undecaprenyl phosphate + phosphate + H(+). Functionally, catalyzes the dephosphorylation of undecaprenyl diphosphate (UPP). Confers resistance to bacitracin. This chain is Undecaprenyl-diphosphatase, found in Pectobacterium carotovorum subsp. carotovorum (strain PC1).